A 136-amino-acid polypeptide reads, in one-letter code: ATP synthase epsilon chain (136 aa).

The disordered stretch occupies residues glycine 112–glutamate 136. The segment covering aspartate 116–asparagine 125 has biased composition (basic and acidic residues).

Belongs to the ATPase epsilon chain family. F-type ATPases have 2 components, CF(1) - the catalytic core - and CF(0) - the membrane proton channel. CF(1) has five subunits: alpha(3), beta(3), gamma(1), delta(1), epsilon(1). CF(0) has three main subunits: a, b and c.

The protein localises to the cellular thylakoid membrane. Its function is as follows. Produces ATP from ADP in the presence of a proton gradient across the membrane. This Prochlorococcus marinus (strain SARG / CCMP1375 / SS120) protein is ATP synthase epsilon chain.